The primary structure comprises 350 residues: DNA repair protein rhp55 (350 aa).

Residue 51-58 participates in ATP binding; it reads GAPGMGKT. A disordered region spans residues 331 to 350; sequence QSIPTNSSQRRKRSILECES.

Belongs to the RecA family. RAD55 subfamily.

The protein localises to the nucleus. In terms of biological role, required for radiation resistance and meiotic viability and acts in recombination and recombinational DNA repair pathways. The sequence is that of DNA repair protein rhp55 (rhp55) from Schizosaccharomyces pombe (strain 972 / ATCC 24843) (Fission yeast).